Reading from the N-terminus, the 188-residue chain is Probable manganese efflux pump MntP (188 aa).

5 helical membrane-spanning segments follow: residues 3–23 (ITAT…ASIG), 66–86 (LEWN…RMII), 106–128 (WLLV…GLAF), 143–163 (ATLI…SIIG), and 168–188 (ILGG…HFHG).

This sequence belongs to the MntP (TC 9.B.29) family.

It is found in the cell inner membrane. Probably functions as a manganese efflux pump. This is Probable manganese efflux pump MntP from Shigella flexneri serotype 5b (strain 8401).